Reading from the N-terminus, the 263-residue chain is MKPVTLSTLNRYKQEKKKFATITAYDASFARLFANEGIPAMLIGDSLGMTLQGHDSTLPVTVEQIAYHTRCVRAGAPNAFLIADMPFMSYSTPEQACLNAAILMQAGANMVKIEGGSWLIPTVKMLTERAVPVCIHLGLTPQSVNVFGGYKVQGREEAAAEQLKQDAMALEAAGAQLAVLECVPVSVAKTITGSLNIPVIGIGAGNVTDGQILVMHDLLGLTPNAPKFSKNFLQEAGSLPEAVRLYVQQVEQKLFPQEQHSFN.

Mg(2+) contacts are provided by Asp-45 and Asp-84. 3-methyl-2-oxobutanoate is bound by residues 45–46, Asp-84, and Lys-112; that span reads DS. Glu-114 contributes to the Mg(2+) binding site. Glu-181 serves as the catalytic Proton acceptor.

Belongs to the PanB family. As to quaternary structure, homodecamer; pentamer of dimers. Requires Mg(2+) as cofactor.

Its subcellular location is the cytoplasm. It carries out the reaction 3-methyl-2-oxobutanoate + (6R)-5,10-methylene-5,6,7,8-tetrahydrofolate + H2O = 2-dehydropantoate + (6S)-5,6,7,8-tetrahydrofolate. Its pathway is cofactor biosynthesis; (R)-pantothenate biosynthesis; (R)-pantoate from 3-methyl-2-oxobutanoate: step 1/2. Catalyzes the reversible reaction in which hydroxymethyl group from 5,10-methylenetetrahydrofolate is transferred onto alpha-ketoisovalerate to form ketopantoate. This Proteus mirabilis (strain HI4320) protein is 3-methyl-2-oxobutanoate hydroxymethyltransferase.